An 89-amino-acid polypeptide reads, in one-letter code: UPF0335 protein RPE_4107 (89 aa).

Belongs to the UPF0335 family.

This chain is UPF0335 protein RPE_4107, found in Rhodopseudomonas palustris (strain BisA53).